Reading from the N-terminus, the 332-residue chain is Ferredoxin--NADP reductase 2 (332 aa).

Glu37, Gln45, Tyr50, Val90, Phe124, Asp285, and Thr326 together coordinate FAD.

It belongs to the ferredoxin--NADP reductase type 2 family. In terms of assembly, homodimer. FAD serves as cofactor.

The enzyme catalyses 2 reduced [2Fe-2S]-[ferredoxin] + NADP(+) + H(+) = 2 oxidized [2Fe-2S]-[ferredoxin] + NADPH. The sequence is that of Ferredoxin--NADP reductase 2 from Bacillus pumilus (strain SAFR-032).